The chain runs to 49 residues: Osteocalcin (49 aa).

Position 1 is a pyrrolidone carboxylic acid (glutamine 1). A Gla domain is found at 1-47 (QLINGQGAPAPYPDPLEPKREVCELNPDCDELADQVGLQDAYQRFYG). A 4-hydroxyproline modification is found at proline 9. Positions 17, 21, 24, and 30 each coordinate Ca(2+). A 4-carboxyglutamate mark is found at glutamate 17, glutamate 21, and glutamate 24. Residues cysteine 23 and cysteine 29 are joined by a disulfide bond.

This sequence belongs to the osteocalcin/matrix Gla protein family. Post-translationally, gamma-carboxyglutamate residues are formed by vitamin K dependent carboxylation by GGCX. These residues are essential for the binding of calcium. Decarboxylation promotes the hormone activity.

It is found in the secreted. The carboxylated form is one of the main organic components of the bone matrix, which constitutes 1-2% of the total bone protein: it acts as a negative regulator of bone formation and is required to limit bone formation without impairing bone resorption or mineralization. The carboxylated form binds strongly to apatite and calcium. Functionally, the uncarboxylated form acts as a hormone secreted by osteoblasts, which regulates different cellular processes, such as energy metabolism, male fertility and brain development. Regulates of energy metabolism by acting as a hormone favoring pancreatic beta-cell proliferation, insulin secretion and sensitivity and energy expenditure. Uncarboxylated osteocalcin hormone also promotes testosterone production in the testes: acts as a ligand for G protein-coupled receptor GPRC6A at the surface of Leydig cells, initiating a signaling response that promotes the expression of enzymes required for testosterone synthesis in a CREB-dependent manner. Also acts as a regulator of brain development: osteocalcin hormone crosses the blood-brain barrier and acts as a ligand for GPR158 on neurons, initiating a signaling response that prevents neuronal apoptosis in the hippocampus, favors the synthesis of all monoamine neurotransmitters and inhibits that of gamma-aminobutyric acid (GABA). Osteocalcin also crosses the placenta during pregnancy and maternal osteocalcin is required for fetal brain development. This is Osteocalcin (BGLAP) from Oryctolagus cuniculus (Rabbit).